The following is a 414-amino-acid chain: RNA exonuclease 4 (414 aa).

The disordered stretch occupies residues 1-174 (MAKAKVKQDQ…GGTQPEPPKV (174 aa)). Basic residues predominate over residues 26-42 (QTKKQKKKKFWKNHPKI). Composition is skewed to basic and acidic residues over residues 90–108 (KFPKKDQKVSEKKNGDPEP) and 150–161 (KAEGTEQLDPPK). In terms of domain architecture, Exonuclease spans 228-379 (TVAMDCEMVG…QDAQAAMRLY (152 aa)).

It belongs to the REXO4 family.

It is found in the nucleus. The polypeptide is RNA exonuclease 4 (rexo4) (Xenopus tropicalis (Western clawed frog)).